Consider the following 330-residue polypeptide: D-lactate dehydrogenase (330 aa).

Residues 156–157 (RI), aspartate 176, 206–207 (VP), 233–235 (AAR), and aspartate 259 each bind NAD(+). Residue arginine 235 is part of the active site. Glutamate 264 is a catalytic residue. Histidine 296 functions as the Proton donor in the catalytic mechanism.

It belongs to the D-isomer specific 2-hydroxyacid dehydrogenase family.

It catalyses the reaction (R)-lactate + NAD(+) = pyruvate + NADH + H(+). The chain is D-lactate dehydrogenase (ldhD) from Staphylococcus aureus (strain MSSA476).